A 308-amino-acid polypeptide reads, in one-letter code: Very-long-chain enoyl-CoA reductase (308 aa).

At 1–86 the chain is on the cytoplasmic side; it reads MKHYEVEILD…YFRDLGAQIS (86 aa). An N6-acetyllysine modification is found at K22. S58 bears the Phosphoserine mark. An N6-acetyllysine modification is found at K60. The chain crosses the membrane as a helical span at residues 87–106; the sequence is WVTVFLTEYAGPLFIYLLFY. At 107 to 124 the chain is on the lumenal side; that stretch reads FRVPFIYGHKYDFTSSRH. A helical transmembrane segment spans residues 125 to 147; it reads TVVHLACICHSFHYIKRLLETLF. Over 148 to 158 the chain is Cytoplasmic; sequence VHRFSHGTMPL. Residues 159–180 traverse the membrane as a helical segment; sequence RNIFKNCTYYWGFAAWMAYYIN. The Lumenal portion of the chain corresponds to 181 to 189; it reads HPLYTPPTY. Residues 190 to 216 traverse the membrane as a helical segment; that stretch reads GAQQVKLALAIFVICQLGNFSIHMALR. The Cytoplasmic segment spans residues 217–245; that stretch reads DLRPAGSKTRKIPYPTKNPFTWLFLLVSC. The chain crosses the membrane as a helical span at residues 246–262; that stretch reads PNYTYEVGSWIGFAIMT. Over 263–264 the chain is Lumenal; sequence QC. The helical transmembrane segment at 265 to 292 threads the bilayer; sequence LPVALFSLVGFTQMTIWAKGKHRSYLKE. At 293-308 the chain is on the cytoplasmic side; sequence FRDYPPLRMPIIPFLL.

It belongs to the steroid 5-alpha reductase family. In terms of assembly, interacts with ELOVL1 and LASS2. Interacts with HACD1 and HACD2 (via the third lumenal loop), but not with HACD3 and HACD4. Interacts with ELOVL1, ELOVL2, ELOVL3, ELOVL5 and ELOVL7 in the presence of acyl-CoA; interaction with HACD1/2 and that with ELOVLs are mutually exclusive. Glycosylated. Expressed in most tissues tested. Highly expressed in skeletal muscle.

It localises to the endoplasmic reticulum membrane. It catalyses the reaction a very-long-chain 2,3-saturated fatty acyl-CoA + NADP(+) = a very-long-chain (2E)-enoyl-CoA + NADPH + H(+). It carries out the reaction octadecanoyl-CoA + NADP(+) = (2E)-octadecenoyl-CoA + NADPH + H(+). The catalysed reaction is (2E,7Z,10Z,13Z,16Z)-docosapentaenoyl-CoA + NADPH + H(+) = (7Z,10Z,13Z,16Z)-docosatetraenoyl-CoA + NADP(+). The enzyme catalyses (2E,7Z,10Z,13Z,16Z,19Z)-docosahexaenoyl-CoA + NADPH + H(+) = (7Z,10Z,13Z,16Z,19Z)-docosapentaenoyl-CoA + NADP(+). It catalyses the reaction (2E,8Z,11Z,14Z)-eicosatetraenoyl-CoA + NADPH + H(+) = (8Z,11Z,14Z)-eicosatrienoyl-CoA + NADP(+). It carries out the reaction (2E)-hexadecenoyl-CoA + NADPH + H(+) = hexadecanoyl-CoA + NADP(+). It participates in lipid metabolism; fatty acid biosynthesis. The protein operates within lipid metabolism; sphingolipid metabolism. In terms of biological role, involved in both the production of very long-chain fatty acids for sphingolipid synthesis and the degradation of the sphingosine moiety in sphingolipids through the sphingosine 1-phosphate metabolic pathway. Catalyzes the last of the four reactions of the long-chain fatty acids elongation cycle. This endoplasmic reticulum-bound enzymatic process, allows the addition of 2 carbons to the chain of long- and very long-chain fatty acids/VLCFAs per cycle. This enzyme reduces the trans-2,3-enoyl-CoA fatty acid intermediate to an acyl-CoA that can be further elongated by entering a new cycle of elongation. Thereby, it participates in the production of VLCFAs of different chain lengths that are involved in multiple biological processes as precursors of membrane lipids and lipid mediators. Catalyzes the saturation step of the sphingosine 1-phosphate metabolic pathway, the conversion of trans-2-hexadecenoyl-CoA to palmitoyl-CoA. The chain is Very-long-chain enoyl-CoA reductase (TECR) from Homo sapiens (Human).